Reading from the N-terminus, the 398-residue chain is 1-deoxy-D-xylulose 5-phosphate reductoisomerase (398 aa).

NADPH-binding residues include Thr10, Gly11, Ser12, Ile13, Gly36, Lys37, Asn38, and Asn124. Position 125 (Lys125) interacts with 1-deoxy-D-xylulose 5-phosphate. Glu126 contacts NADPH. Asp150 lines the Mn(2+) pocket. Ser151, Glu152, Ser186, and His209 together coordinate 1-deoxy-D-xylulose 5-phosphate. Glu152 contacts Mn(2+). Residue Gly215 participates in NADPH binding. The 1-deoxy-D-xylulose 5-phosphate site is built by Ser222, Asn227, Lys228, and Glu231. A Mn(2+)-binding site is contributed by Glu231.

It belongs to the DXR family. In terms of assembly, homodimer. The cofactor is Mg(2+). Requires Mn(2+) as cofactor. It depends on Co(2+) as a cofactor.

It carries out the reaction 2-C-methyl-D-erythritol 4-phosphate + NADP(+) = 1-deoxy-D-xylulose 5-phosphate + NADPH + H(+). It participates in isoprenoid biosynthesis; isopentenyl diphosphate biosynthesis via DXP pathway; isopentenyl diphosphate from 1-deoxy-D-xylulose 5-phosphate: step 1/6. With respect to regulation, inhibited by fosmidomycin. In terms of biological role, catalyzes the NADPH-dependent rearrangement and reduction of 1-deoxy-D-xylulose-5-phosphate (DXP) to 2-C-methyl-D-erythritol 4-phosphate (MEP). This is 1-deoxy-D-xylulose 5-phosphate reductoisomerase (dxr) from Escherichia coli (strain K12).